The sequence spans 294 residues: NAD kinase (294 aa).

Aspartate 74 (proton acceptor) is an active-site residue. Residues 74-75 (DG), 148-149 (NE), histidine 159, arginine 176, aspartate 178, 189-194 (TAYSLS), and glutamine 249 each bind NAD(+).

Belongs to the NAD kinase family. Requires a divalent metal cation as cofactor.

It is found in the cytoplasm. It carries out the reaction NAD(+) + ATP = ADP + NADP(+) + H(+). Involved in the regulation of the intracellular balance of NAD and NADP, and is a key enzyme in the biosynthesis of NADP. Catalyzes specifically the phosphorylation on 2'-hydroxyl of the adenosine moiety of NAD to yield NADP. The protein is NAD kinase of Vibrio vulnificus (strain CMCP6).